Here is a 341-residue protein sequence, read N- to C-terminus: Retinol dehydrogenase 10 (341 aa).

Residues isoleucine 3–alanine 23 form a helical; Signal-anchor membrane-spanning segment. Leucine 40 to valine 64 provides a ligand contact to NADP(+). Residue serine 197 coordinates substrate. Tyrosine 210 functions as the Proton acceptor in the catalytic mechanism.

This sequence belongs to the short-chain dehydrogenases/reductases (SDR) family. As to expression, detected in retina, entire eyecups and in liver (at protein level).

The protein localises to the microsome membrane. Its subcellular location is the endoplasmic reticulum membrane. It catalyses the reaction all-trans-retinol + NADP(+) = all-trans-retinal + NADPH + H(+). It functions in the pathway cofactor metabolism; retinol metabolism. Functionally, retinol dehydrogenase with a clear preference for NADP. Converts all-trans-retinol to all-trans-retinal. The chain is Retinol dehydrogenase 10 (Rdh10) from Rattus norvegicus (Rat).